The following is a 429-amino-acid chain: WRKY transcription factor 44 (429 aa).

The segment at residues 159–223 (TGDRSSVDGY…YQGEHNHSKP (65 aa)) is a DNA-binding region (WRKY 1). Zn(2+) contacts are provided by Cys-190, Cys-195, His-218, and His-220. Disordered regions lie at residues 214–279 (YQGE…RTEK) and 292–348 (AVPR…SDSL). 3 stretches are compositionally biased toward polar residues: residues 254 to 275 (QDPNNNLYSPLWNNQSNDSTQN), 295 to 313 (RSTNSNPGTSDSGCKSSQC), and 334 to 345 (SEAGVSQGSVES). The WRKY 2 DNA-binding region spans 343-408 (VESDSLEDGF…YEGKHNHHLL (66 aa)). The Zn(2+) site is built by Cys-374, Cys-379, His-403, and His-405. Low complexity predominate over residues 410–422 (SPPSSSTLPFNSP). The tract at residues 410–429 (SPPSSSTLPFNSPQLSKQTI) is disordered.

It belongs to the WRKY group I family. In terms of tissue distribution, leaf promordia, trichomes, atrichoblasts, fertilized eggs, seed coat.

It localises to the nucleus. In terms of biological role, transcription factor. Interacts specifically with the W box (5'-(T)TGAC[CT]-3'), a frequently occurring elicitor-responsive cis-acting element. Regulates trichome development, production of mucilage and tannin in seed coats, and maybe root hair development. This is WRKY transcription factor 44 (WRKY44) from Arabidopsis thaliana (Mouse-ear cress).